The sequence spans 147 residues: Hemoglobin subunit beta (147 aa).

Position 2 is an N-acetylvaline (valine 2). Positions 3–147 (NLSGDEKNAV…VANALAHRYH (145 aa)) constitute a Globin domain. Serine 45 is modified (phosphoserine). Residue lysine 60 is modified to N6-acetyllysine. Histidine 64 serves as a coordination point for heme b. Lysine 83 carries the post-translational modification N6-acetyllysine. Histidine 93 provides a ligand contact to heme b. Cysteine 94 carries the S-nitrosocysteine modification.

Belongs to the globin family. As to quaternary structure, heterotetramer of two alpha chains and two beta chains. As to expression, red blood cells.

In terms of biological role, involved in oxygen transport from the lung to the various peripheral tissues. The protein is Hemoglobin subunit beta (HBB) of Vicugna pacos (Alpaca).